Consider the following 635-residue polypeptide: MHGLLLAAGLLSLPLHVLAHPQPSTSTSLAGRAGAVDLNEFRVAHRSSYTSHDEMKKLPSIASFRQGTYLEVATELVKQTMPNMEFRLVDDHYVGDSGIGHVRFRQTMHGIDIDNSDFNVNVGKDGKILSHGNSFYTGPAPASNPMVKRDFIDPMQALNGVRKALNLPVKANGAHVENMSEHKVMFKGTSGALSDPTAKLCYMAKEDGSLALTWRVETDIGDNWLLSYMDAKESSKVHNVVDYVAHATFQVYKWGLADPTEGKRDILTNPWNLKTSPLTWLADGKTNFTATRGNNAIAQYNPDGGNDYENNYRPSPKNLKFEYPYSPDMNPPKTYIDASVTQLFYTSNVCHDLYYMLGFNEKAGNFQVNNRGQGGKGNDYVILNAQDGSGTNNANFATPPDGQPGRMRAYIWTRANPPRDASFEAGTIIHEYTHGLSNRLCGGPANSRCLNALESGGMGEGWGDFYATAVRLKPNDTRKTNYVKGGWVNNSPKGVRMYPYSTDMNVNPLVYTSNNKLNEVHAIGTVWCTMLYEVLWNLIDKHGKNDGPVPVFENGVPNDGKYLAMKLVMDGMAIQPCNPNFVQARDAILDADMNLTKGANKCEIWKGFAKRGLGVGAKFDPKNRTGSNQVPNECK.

The first 19 residues, 1-19, serve as a signal peptide directing secretion; that stretch reads MHGLLLAAGLLSLPLHVLA. A propeptide spanning residues 20-246 is cleaved from the precursor; it reads HPQPSTSTSL…VHNVVDYVAH (227 aa). A glycan (N-linked (GlcNAc...) asparagine) is linked at Asn-287. A Zn(2+)-binding site is contributed by His-430. Glu-431 is an active-site residue. A Zn(2+)-binding site is contributed by His-434. Asn-475, Asn-594, and Asn-623 each carry an N-linked (GlcNAc...) asparagine glycan.

The protein belongs to the peptidase M36 family. Requires Zn(2+) as cofactor.

Its subcellular location is the secreted. Secreted metalloproteinase probably acting as a virulence factor. This is Extracellular metalloproteinase 1 (MEP1) from Trichophyton tonsurans (Scalp ringworm fungus).